Here is an 887-residue protein sequence, read N- to C-terminus: Dystrophin-like protein 1 (887 aa).

Residues 30–197 form the PID domain; it reads YQHGIHFEAK…KISMQSEDEA (168 aa). Basic and acidic residues-rich tracts occupy residues 176 to 186 and 205 to 216; these read MQEKHEDEAAK and IEERGGREEDSR. Disordered regions lie at residues 176–254, 506–606, 641–753, 804–839, and 853–887; these read MQEK…GTAI, EIHH…QYER, QFDM…KNTA, IAEEPEPSEMDPNRNNLPSSTNSSMKRRGFLPPPNT, and NVDRSKLPETSLLTRLTRQAQGDNSLGNLPNGYPQ. Positions 242 to 254 are enriched in polar residues; it reads KPSTTSSSGGTAI. Residues 434–506 are a coiled coil; it reads QLMRSQLDQA…QMLETKITSE (73 aa). Over residues 510–519 the composition is skewed to low complexity; the sequence is SSSQPPQHQP. The segment covering 573–588 has biased composition (basic and acidic residues); that stretch reads KESKERRKDEGTRTEP. Residues 597 to 606 are compositionally biased toward polar residues; it reads DYSSSDQYER. Composition is skewed to polar residues over residues 816–827 and 863–887; these read NRNNLPSSTNSS and SLLTRLTRQAQGDNSLGNLPNGYPQ.

As to quaternary structure, component of the dystrophin glycoprotein complex (DGC). Interacts with zyx-1. Expressed in muscles of the head, body wall and vulva. In some animals, weaker expression is observed in the intestinal muscles (at protein level). Isoform a is expressed in lateral neurons SDQL and SDQR.

Together with dys-1 and hlh-1, participates in a common muscular function. The protein is Dystrophin-like protein 1 of Caenorhabditis elegans.